The primary structure comprises 131 residues: Small ribosomal subunit protein uS8 (131 aa).

Belongs to the universal ribosomal protein uS8 family. As to quaternary structure, part of the 30S ribosomal subunit. Contacts proteins S5 and S12.

Functionally, one of the primary rRNA binding proteins, it binds directly to 16S rRNA central domain where it helps coordinate assembly of the platform of the 30S subunit. The chain is Small ribosomal subunit protein uS8 from Hydrogenovibrio crunogenus (strain DSM 25203 / XCL-2) (Thiomicrospira crunogena).